The following is a 414-amino-acid chain: L-cysteine:1D-myo-inositol 2-amino-2-deoxy-alpha-D-glucopyranoside ligase (414 aa).

Cysteine 43 is a binding site for Zn(2+). L-cysteinyl-5'-AMP contacts are provided by residues 43-46 (CGIT), threonine 58, and 81-83 (NVT). Positions 45–55 (ITPYDATHLGH) match the 'HIGH' region motif. The 'ERGGDP' region motif lies at 187-192 (ERGGDP). Tryptophan 227 is an L-cysteinyl-5'-AMP binding site. Cysteine 231 is a binding site for Zn(2+). Residue 249-251 (GSD) coordinates L-cysteinyl-5'-AMP. Zn(2+) is bound at residue histidine 256. Isoleucine 283 serves as a coordination point for L-cysteinyl-5'-AMP. The 'KMSKS' region signature appears at 289–293 (KMSKS).

Belongs to the class-I aminoacyl-tRNA synthetase family. MshC subfamily. In terms of assembly, monomer. Requires Zn(2+) as cofactor.

The enzyme catalyses 1D-myo-inositol 2-amino-2-deoxy-alpha-D-glucopyranoside + L-cysteine + ATP = 1D-myo-inositol 2-(L-cysteinylamino)-2-deoxy-alpha-D-glucopyranoside + AMP + diphosphate + H(+). Its function is as follows. Catalyzes the ATP-dependent condensation of GlcN-Ins and L-cysteine to form L-Cys-GlcN-Ins. This Tsukamurella paurometabola (strain ATCC 8368 / DSM 20162 / CCUG 35730 / CIP 100753 / JCM 10117 / KCTC 9821 / NBRC 16120 / NCIMB 702349 / NCTC 13040) (Corynebacterium paurometabolum) protein is L-cysteine:1D-myo-inositol 2-amino-2-deoxy-alpha-D-glucopyranoside ligase.